We begin with the raw amino-acid sequence, 609 residues long: Thiamine metabolism regulatory protein THI3 (609 aa).

Positions 578 to 598 are disordered; sequence SKQVQEENENSSAVNTPTPEF.

The protein belongs to the TPP enzyme family. The cofactor is Mg(2+). Thiamine diphosphate serves as cofactor.

It localises to the nucleus. The enzyme catalyses 4-methyl-2-oxopentanoate + H(+) = 3-methylbutanal + CO2. The catalysed reaction is (S)-3-methyl-2-oxopentanoate + H(+) = 2-methylbutanal + CO2. Its pathway is amino-acid degradation; Ehrlich pathway. Its function is as follows. One of five 2-oxo acid decarboxylases (PDC1, PDC5, PDC6, ARO10, and THI3) involved in amino acid catabolism. The enzyme catalyzes the decarboxylation of amino acids, which, in a first step, have been transaminated to the corresponding 2-oxo acids (alpha-keto-acids). In a third step, the resulting aldehydes are reduced to alcohols, collectively referred to as fusel oils or alcohols. Its preferred substrates are the transaminated amino acids derived from leucine (4-methyl-2-oxopentanoate, also alpha-keto-isocaproate) and isoleucine ((3S)-3-methyl-2-oxopentanoate, also alpha-keto-beta-methylvalerate), whereas transaminated valine, transaminated aromatic amino acids, and pyruvate are no substrates. In analogy to the pyruvate decarboxylases the enzyme may in a side-reaction catalyze condensation (or carboligation) reactions leading to the formation of 2-hydroxy ketone, collectively called acyloins. The enzyme is also positively regulating the thiamine metabolism by a molecular mechanism that may involve thiamine concentration sensing and signal transmission. The sequence is that of Thiamine metabolism regulatory protein THI3 (THI3) from Saccharomyces cerevisiae (strain ATCC 204508 / S288c) (Baker's yeast).